A 59-amino-acid chain; its full sequence is Large ribosomal subunit protein bL32 (59 aa).

The interval 1 to 59 (MAVQQNRKTPSKRGMRRSHDSLSKPTLSTEQNTGETHRRHHISADGYYRGRKVTRGQDD) is disordered. Residues 23–34 (SKPTLSTEQNTG) are compositionally biased toward polar residues. Positions 49-59 (RGRKVTRGQDD) are enriched in basic residues.

This sequence belongs to the bacterial ribosomal protein bL32 family.

The protein is Large ribosomal subunit protein bL32 of Halorhodospira halophila (strain DSM 244 / SL1) (Ectothiorhodospira halophila (strain DSM 244 / SL1)).